A 238-amino-acid polypeptide reads, in one-letter code: tRNA (guanine-N(7)-)-methyltransferase (238 aa).

Residues Glu68, Glu93, Asp120, and Asp143 each contribute to the S-adenosyl-L-methionine site. Asp143 is an active-site residue. Residues Lys147, Asp179, and 216-219 (TKFE) each bind substrate.

Belongs to the class I-like SAM-binding methyltransferase superfamily. TrmB family.

The enzyme catalyses guanosine(46) in tRNA + S-adenosyl-L-methionine = N(7)-methylguanosine(46) in tRNA + S-adenosyl-L-homocysteine. The protein operates within tRNA modification; N(7)-methylguanine-tRNA biosynthesis. Its function is as follows. Catalyzes the formation of N(7)-methylguanine at position 46 (m7G46) in tRNA. The chain is tRNA (guanine-N(7)-)-methyltransferase from Aliivibrio salmonicida (strain LFI1238) (Vibrio salmonicida (strain LFI1238)).